A 327-amino-acid polypeptide reads, in one-letter code: Ribosomal RNA small subunit methyltransferase H (327 aa).

S-adenosyl-L-methionine contacts are provided by residues 41 to 43, Asp60, Tyr87, Asp108, and Gln115; that span reads GGH. The disordered stretch occupies residues 292 to 327; that stretch reads AERADEQETLENPRAASARLRAVERLRETTTPGSAR.

It belongs to the methyltransferase superfamily. RsmH family.

Its subcellular location is the cytoplasm. The catalysed reaction is cytidine(1402) in 16S rRNA + S-adenosyl-L-methionine = N(4)-methylcytidine(1402) in 16S rRNA + S-adenosyl-L-homocysteine + H(+). Functionally, specifically methylates the N4 position of cytidine in position 1402 (C1402) of 16S rRNA. The sequence is that of Ribosomal RNA small subunit methyltransferase H from Kocuria rhizophila (strain ATCC 9341 / DSM 348 / NBRC 103217 / DC2201).